The chain runs to 109 residues: Large ribosomal subunit protein uL24 (109 aa).

The protein belongs to the universal ribosomal protein uL24 family. In terms of assembly, part of the 50S ribosomal subunit.

Its function is as follows. One of two assembly initiator proteins, it binds directly to the 5'-end of the 23S rRNA, where it nucleates assembly of the 50S subunit. Functionally, one of the proteins that surrounds the polypeptide exit tunnel on the outside of the subunit. This is Large ribosomal subunit protein uL24 from Rickettsia akari (strain Hartford).